A 119-amino-acid polypeptide reads, in one-letter code: Large ribosomal subunit protein bL20 (119 aa).

It belongs to the bacterial ribosomal protein bL20 family.

In terms of biological role, binds directly to 23S ribosomal RNA and is necessary for the in vitro assembly process of the 50S ribosomal subunit. It is not involved in the protein synthesizing functions of that subunit. The protein is Large ribosomal subunit protein bL20 of Nitrosomonas europaea (strain ATCC 19718 / CIP 103999 / KCTC 2705 / NBRC 14298).